A 278-amino-acid polypeptide reads, in one-letter code: Alcohol dehydrogenase-related 31 kDa protein (278 aa).

Residue 11-34 (YVADCGGIALETSKVLMTKNIAKL) coordinates NAD(+). Serine 139 provides a ligand contact to substrate. Residue tyrosine 152 is the Proton acceptor of the active site.

The protein belongs to the short-chain dehydrogenases/reductases (SDR) family.

The chain is Alcohol dehydrogenase-related 31 kDa protein (Adhr) from Drosophila persimilis (Fruit fly).